Here is a 235-residue protein sequence, read N- to C-terminus: Caffeoyl-CoA O-methyltransferase (235 aa).

Position 8 (Lys8) interacts with substrate. Residues Val52, Glu74, 76-77, Ser82, Asp100, and Ala129 contribute to the S-adenosyl-L-methionine site; that span reads GV. Asp151 serves as a coordination point for substrate. Asp151 contacts a divalent metal cation. Position 153 (Asp153) interacts with S-adenosyl-L-methionine. Asp177 and Asn178 together coordinate a divalent metal cation.

This sequence belongs to the class I-like SAM-binding methyltransferase superfamily. Cation-dependent O-methyltransferase family. CCoAMT subfamily. Requires a divalent metal cation as cofactor.

It catalyses the reaction (E)-caffeoyl-CoA + S-adenosyl-L-methionine = (E)-feruloyl-CoA + S-adenosyl-L-homocysteine + H(+). It participates in aromatic compound metabolism; phenylpropanoid biosynthesis. Methylates caffeoyl-CoA to feruloyl-CoA and 5-hydroxyferuloyl-CoA to sinapoyl-CoA. Plays a role in the synthesis of feruloylated polysaccharides. Involved in the reinforcement of the plant cell wall. Also involved in the responding to wounding or pathogen challenge by the increased formation of cell wall-bound ferulic acid polymers. This is Caffeoyl-CoA O-methyltransferase from Populus kitakamiensis (Aspen).